The sequence spans 338 residues: Nodulation outer protein L (338 aa).

A compositionally biased stretch (polar residues) spans 1 to 14 (MDINSTSPLNASPQ). Disordered regions lie at residues 1–48 (MDIN…LPQV), 85–158 (TRER…DLET), 187–209 (SPAPLTAERGRSPQPSEQQPHAR), and 230–259 (PQAGPWQVGPSHSGPSQARPSHAWPSSSAG). A compositionally biased stretch (basic and acidic residues) spans 85 to 97 (TRERSPHPSEQRP). The span at 126–138 (VGPSRSGPSQAGL) shows a compositional bias: polar residues. The span at 242–258 (SGPSQARPSHAWPSSSA) shows a compositional bias: polar residues.

The protein localises to the secreted. Its function is as follows. Putative symbiotic effector that modulates nodulation in legumes. When delivered into the plant cell, modulates the activity of signal transduction pathways that culminate in activation of PR proteins. In Sinorhizobium fredii (strain NBRC 101917 / NGR234), this protein is Nodulation outer protein L (nopL).